The primary structure comprises 393 residues: Protein TsgA (393 aa).

Over 1–10 (MTNSNRIKLT) the chain is Cytoplasmic. Residues 11–31 (WISFLSYALTGALVIVTGMVM) form a helical membrane-spanning segment. Residues 32-50 (GNIADYFHLPVSSMSNTFT) lie on the Periplasmic side of the membrane. A helical membrane pass occupies residues 51–71 (FLNAGILISIFLNAWLMEIIP). Residues 72 to 77 (LKTQLR) lie on the Cytoplasmic side of the membrane. A helical transmembrane segment spans residues 78–98 (FGFILMVLAVAGLMFGHSLAL). The Periplasmic segment spans residues 99-100 (FS). Residues 101–121 (AAMFVLGLVSGITMSIGTFLI) form a helical membrane-spanning segment. At 122–133 (TQLYEGRQRGSR) the chain is on the cytoplasmic side. A helical transmembrane segment spans residues 134 to 154 (LLFTDSFFSMAGMIFPMVAAF). The Periplasmic portion of the chain corresponds to 155–161 (LLARSIE). A helical membrane pass occupies residues 162–182 (WYWVYACIGLVYLAIFILTFG). Residues 183 to 205 (CEFPALGKHAQHSQAPVVKEKWG) are Cytoplasmic-facing. Residues 206–226 (IGVLFLAVAALCYILGQLGFI) traverse the membrane as a helical segment. Topologically, residues 227–244 (SWVPEYAKGLGMSLNDAG) are periplasmic. A helical membrane pass occupies residues 245–265 (ALVSDFWMSYMFGMWAFSFIL). Over 266–272 (RFFDLQR) the chain is Cytoplasmic. A helical membrane pass occupies residues 273–293 (ILTVLAGMAAVLMYLFITGTQ). Over 294-297 (AHMP) the chain is Periplasmic. Residues 298–318 (WFILTLGFFSSAIYTSIITLG) traverse the membrane as a helical segment. Topologically, residues 319-331 (SQQTKVASPKLVN) are cytoplasmic. Residues 332–352 (FILTCGTIGTMLTFVVTGPIV) form a helical membrane-spanning segment. The Periplasmic portion of the chain corresponds to 353–360 (AHSGPQAA). A helical transmembrane segment spans residues 361–381 (LLTANGLYAVVFVMCFALGFV). Over 382–393 (SRHRQHSAPATH) the chain is Cytoplasmic.

Belongs to the major facilitator superfamily. TsgA family.

Its subcellular location is the cell inner membrane. The sequence is that of Protein TsgA from Salmonella choleraesuis (strain SC-B67).